Consider the following 616-residue polypeptide: MNSPGGRGKKKGSGGASNPVPPRPPPPCLAPAPPAAGPAPPPESPHKRNLYYFSYPLFVGFALLRLVAFHLGLLFVWLCQRFSRALMAAKRSSGAAPAPASASAPAPVPGGEAERVRVFHKQAFEYISIALRIDEDEKAGQKEQAVEWYKKGIEELEKGIAVIVTGQGEQCERARRLQAKMMTNLVMAKDRLQLLEKMQPVLPFSKSQTDVYNDSTNLACRNGHLQSESGAVPKRKDPLTHTSNSLPRSKTVMKTGSAGLSGHHRAPSYSGLSMVSGVKQGSGPAPTTHKGTPKTNRTNKPSTPTTATRKKKDLKNFRNVDSNLANLIMNEIVDNGTAVKFDDIAGQDLAKQALQEIVILPSLRPELFTGLRAPARGLLLFGPPGNGKTMLAKAVAAESNATFFNISAASLTSKYVGEGEKLVRALFAVARELQPSIIFIDEVDSLLCERREGEHDASRRLKTEFLIEFDGVQSAGDDRVLVMGATNRPQELDEAVLRRFIKRVYVSLPNEETRLLLLKNLLCKQGSPLTQKELAQLARMTDGYSGSDLTALAKDAALGPIRELKPEQVKNMSASEMRNIRLSDFTESLKKIKRSVSPQTLEAYIRWNKDFGDTTV.

Residues Met1–Glu43 form a disordered region. The required for nuclear localization stretch occupies residues Met1–Leu50. The Cytoplasmic segment spans residues Met1–Pro56. The interval Met1–Gln80 is required for interaction with ATL1. Residues Met1 to Leu194 are required for midbody localization. The segment at Met1 to Lys300 is required for interaction with RTN1. Positions Pro4–Lys11 match the Nuclear localization signal motif. A compositionally biased stretch (pro residues) spans Pro19–Glu43. Residues Leu50–Met87 form a required for interaction with SSNA1 and microtubules region. Residues Leu57–Trp77 constitute an intramembrane region (helical). Residues Val59–Val67 carry the Nuclear export signal motif. Residues Leu78–Val616 are Cytoplasmic-facing. The tract at residues Glu112 to Glu196 is sufficient for interaction with CHMP1B. The tract at residues Glu114–Pro200 is required for interaction with microtubules. The MIT domain occupies His120–Leu195. The segment at His224 to Ala266 is disordered. Positions Glu228 to Val616 are sufficient for microtubule severing. The segment covering Thr240–Lys254 has biased composition (polar residues). 2 positions are modified to phosphoserine: Ser245 and Ser268. The interval Ser270–Ile328 is required for interaction with microtubules and microtubule severing. The interval Val278 to Lys312 is disordered. A compositionally biased stretch (polar residues) spans His289–Ala307. Thr306 is modified (phosphothreonine). The Nuclear localization signal motif lies at Arg309 to Lys312. The segment at Lys310 to Lys312 is required for interaction with microtubules. An ATP-binding site is contributed by Gly382–Thr389. Ser597 carries the post-translational modification Phosphoserine.

Belongs to the AAA ATPase family. Spastin subfamily. As to quaternary structure, homohexamer. Mostly monomeric, but assembles into hexameric structure for short periods of time. Oligomerization seems to be a prerequisite for catalytic activity. Binding to ATP in a cleft between two adjacent subunits stabilizes the homohexameric form. Binds to microtubules at least in part via the alpha-tubulin and beta-tubulin tails. The hexamer adopts a ring conformation through which microtubules pass prior to being severed. Does not interact strongly with tubulin heterodimers. Interacts (via MIT domain) with CHMP1B; the interaction is direct. Interacts with SSNA1. Interacts with ATL1. Interacts with RTN1. Interacts with ZFYVE27. Isoform 1 but not isoform 3 interacts with RTN2. Interacts with REEP1. Interacts (via MIT domain) with IST1. Expressed in brain, heart, kidney, liver, lung, pancreas, placenta and skeletal muscle. The short isoforms may predominate in brain and spinal cord.

The protein resides in the membrane. It localises to the endoplasmic reticulum. It is found in the midbody. Its subcellular location is the cytoplasm. The protein localises to the cytoskeleton. The protein resides in the microtubule organizing center. It localises to the centrosome. It is found in the perinuclear region. Its subcellular location is the nucleus. The protein localises to the spindle. The protein resides in the cell projection. It localises to the axon. It is found in the endoplasmic reticulum membrane. Its subcellular location is the nucleus membrane. The protein localises to the lipid droplet. The protein resides in the endosome. The catalysed reaction is n ATP + n H2O + a microtubule = n ADP + n phosphate + (n+1) alpha/beta tubulin heterodimers.. Allosteric enzyme with a cooperative mechanism; at least two neighbor subunits influence each other strongly in spastin hexamers. Microtubule binding promotes cooperative interactions among spastin subunits. ATP-bound enzyme interacts strongly and cooperatively with microtubules; this interaction stimulates ATP hydrolysis. ATP-dependent microtubule severing protein that specifically recognizes and cuts microtubules that are polyglutamylated. Preferentially recognizes and acts on microtubules decorated with short polyglutamate tails: severing activity increases as the number of glutamates per tubulin rises from one to eight, but decreases beyond this glutamylation threshold. Severing activity is not dependent on tubulin acetylation or detyrosination. Microtubule severing promotes reorganization of cellular microtubule arrays and the release of microtubules from the centrosome following nucleation. It is critical for the biogenesis and maintenance of complex microtubule arrays in axons, spindles and cilia. SPAST is involved in abscission step of cytokinesis and nuclear envelope reassembly during anaphase in cooperation with the ESCRT-III complex. Recruited at the midbody, probably by IST1, and participates in membrane fission during abscission together with the ESCRT-III complex. Recruited to the nuclear membrane by IST1 and mediates microtubule severing, promoting nuclear envelope sealing and mitotic spindle disassembly during late anaphase. Required for membrane traffic from the endoplasmic reticulum (ER) to the Golgi and endosome recycling. Recruited by IST1 to endosomes and regulates early endosomal tubulation and recycling by mediating microtubule severing. Probably plays a role in axon growth and the formation of axonal branches. Functionally, involved in lipid metabolism by regulating the size and distribution of lipid droplets. The polypeptide is Spastin (Homo sapiens (Human)).